Here is a 95-residue protein sequence, read N- to C-terminus: Large ribosomal subunit protein uL23 (95 aa).

The protein belongs to the universal ribosomal protein uL23 family. As to quaternary structure, part of the 50S ribosomal subunit. Contacts protein L29, and trigger factor when it is bound to the ribosome.

One of the early assembly proteins it binds 23S rRNA. One of the proteins that surrounds the polypeptide exit tunnel on the outside of the ribosome. Forms the main docking site for trigger factor binding to the ribosome. The sequence is that of Large ribosomal subunit protein uL23 from Coxiella burnetii (strain RSA 493 / Nine Mile phase I).